The primary structure comprises 241 residues: Putative hydrolase 080R (241 aa).

One can recognise a Nudix hydrolase domain in the interval 50 to 241 (FPDLSFNLMV…VIKVQKIMIL (192 aa)). A Nudix box motif is present at residues 136–157 (GHCNGNEPVLSTLLREFREETT). Glu151, Glu155, and Asp204 together coordinate Mg(2+).

It belongs to the Nudix hydrolase family.

The protein is Putative hydrolase 080R of Aedes vexans (Inland floodwater mosquito).